The primary structure comprises 412 residues: MGFITKAIPIVLAALSTVNGARILEAGPHAETIPNKYIVVMKKDVSEESFSAHTTWLSQTLNSRLMRRAGSSKPMAGMQNKYSLGGIFRAYSGEFDDAMIKDISSHDDVDFIEPDFVVRATTNGTNLTHQDNVPSWGLARVSTRKPGGTTYYYDPSAGKGVTAYVIDTGIDTKHEDFGGRAKWGKNLVDQMDEDCNGHGTHVAGTVGGTKYGLAKGVSLVAVKVLDCEGSGSNSGVIKGMEWAMMDASGGGNGTAKAAGKAVMNMSLGGPRSEATNQAAKAISDAGIFLAVAAGNENMDAQHSSPASEPSVCTVAASTKDDGKANFSNFGSVVDVYAPGKDIVSLKPGGGTDTLSGTSMASPHVCGLGAYLIGLGKQGGPGLCDTIKQMATDAIQSPGEDTTSKLIYNGSGK.

The signal sequence occupies residues Met1 to Gly20. Positions Ala21–Leu127 are excised as a propeptide. The 85-residue stretch at Lys36–Ala120 folds into the Inhibitor I9 domain. The 278-residue stretch at Ser135–Lys412 folds into the Peptidase S8 domain. Residues Asp167 and His198 each act as charge relay system in the active site. N-linked (GlcNAc...) asparagine glycans are attached at residues Asn252, Asn264, and Asn325. The Charge relay system role is filled by Ser358. N-linked (GlcNAc...) asparagine glycosylation is present at Asn408.

It belongs to the peptidase S8 family.

Its subcellular location is the secreted. Its function is as follows. Secreted subtilisin-like serine protease with keratinolytic activity that contributes to pathogenicity. This is Subtilisin-like protease 6 (SUB6) from Trichophyton verrucosum (strain HKI 0517).